A 156-amino-acid chain; its full sequence is Ribosome maturation factor RimP (156 aa).

It belongs to the RimP family.

The protein localises to the cytoplasm. Required for maturation of 30S ribosomal subunits. This is Ribosome maturation factor RimP from Bacillus thuringiensis (strain Al Hakam).